The sequence spans 288 residues: Light-independent protochlorophyllide reductase iron-sulfur ATP-binding protein (288 aa).

Residues 10-15 (GIGKST) and Lys39 each bind ATP. Ser14 lines the Mg(2+) pocket. Residues Cys95 and Cys129 each contribute to the [4Fe-4S] cluster site. Residue 180–181 (NR) participates in ATP binding.

The protein belongs to the NifH/BchL/ChlL family. As to quaternary structure, homodimer. Protochlorophyllide reductase is composed of three subunits; ChlL, ChlN and ChlB. [4Fe-4S] cluster is required as a cofactor.

The enzyme catalyses chlorophyllide a + oxidized 2[4Fe-4S]-[ferredoxin] + 2 ADP + 2 phosphate = protochlorophyllide a + reduced 2[4Fe-4S]-[ferredoxin] + 2 ATP + 2 H2O. It participates in porphyrin-containing compound metabolism; chlorophyll biosynthesis (light-independent). Functionally, component of the dark-operative protochlorophyllide reductase (DPOR) that uses Mg-ATP and reduced ferredoxin to reduce ring D of protochlorophyllide (Pchlide) to form chlorophyllide a (Chlide). This reaction is light-independent. The L component serves as a unique electron donor to the NB-component of the complex, and binds Mg-ATP. This is Light-independent protochlorophyllide reductase iron-sulfur ATP-binding protein from Nostoc punctiforme (strain ATCC 29133 / PCC 73102).